We begin with the raw amino-acid sequence, 2474 residues long: Serine/threonine-protein kinase TOR2 (2474 aa).

The tract at residues 1 to 62 (MNKYINKYTT…NGPNDSGRVI (62 aa)) is disordered. T10 is subject to Phosphothreonine. A compositionally biased stretch (basic residues) spans 25–36 (HRTRKKLTHKSH). The segment covering 43 to 56 (STTSNTDSNHNGPN) has biased composition (polar residues). HEAT repeat units follow at residues 588–626 (YSLT…KDDI), 636–674 (HSVS…PQLA), 676–710 (PDNL…VNPA), 756–793 (PYID…VGGK), 797–835 (RYLK…SSGY), 841–879 (LDYP…LDPY), 917–955 (YYPT…NLGL), 1039–1076 (RFVP…FGPN), 1079–1116 (DYSH…NINL), 1118–1155 (EMSS…QLGT), and 1292–1331 (SYQE…DDKP). The FAT domain occupies 1338–1922 (TLGKYAQKCH…VYPLMVAIKS (585 aa)). The PI3K/PI4K catalytic domain maps to 2097-2421 (FEPVFSVISS…EHKNAIRNAR (325 aa)). The segment at 2103–2109 (VISSKQR) is G-loop. A catalytic loop region spans residues 2276-2284 (GLGDRHPSN). Residues 2296 to 2321 (HIDFGDCFEAAILREKFPEKVPFRLT) form an activation loop region. Positions 2442 to 2474 (NDLDVPEQVDKLIQQATSVENLCQHYIGWCPFW) constitute an FATC domain.

It belongs to the PI3/PI4-kinase family. As to quaternary structure, the target of rapamycin complex 1 (TORC1) is composed of at least KOG1, LST8, TCO89 and either TOR1 (TORC1-A) or TOR2 (TORC1-B). TORC1 binds to and is inhibited by FKBP-rapamycin. Interacts with PIB2; following activation of PIB2 by glutamine. The target of rapamycin complex 2 (TORC2) is composed of at least AVO1, AVO2, BIT61, LST8, TOR2 and TSC11. TORC2 forms a homodimer. Contrary to TORC1, TORC2 does not bind to and is not sensitive to FKBP-rapamycin. Interacts with SLM1 and SLM2.

The protein resides in the cell membrane. It is found in the vacuole membrane. It catalyses the reaction L-seryl-[protein] + ATP = O-phospho-L-seryl-[protein] + ADP + H(+). It carries out the reaction L-threonyl-[protein] + ATP = O-phospho-L-threonyl-[protein] + ADP + H(+). The enzyme catalyses a 1,2-diacyl-sn-glycero-3-phospho-(1D-myo-inositol) + ATP = a 1,2-diacyl-sn-glycero-3-phospho-(1D-myo-inositol 4-phosphate) + ADP + H(+). Functionally, phosphatidylinositol 3-kinase homolog, component of both TORC1 and TORC2. TORC1 regulates multiple cellular processes to control cell growth in response to environmental signals. Nutrient limitation and environmental stress signals cause inactivation of TORC1. Active TORC1 positively controls ribosome biogenesis via control of rRNA, ribosomal protein and tRNA gene expression, and rRNA processing. TORC1 positively controls protein biosynthesis by regulation of mRNA stability, translation initiation factor activity, and high-affinity amino acid permeases that serve to provide amino acids for use by the translation machinery. TORC1 also promotes growth by sequestering a number of nutrient and general stress-responsive transcription factors in the cytoplasm. TORC1 negatively controls macroautophagy, a process to recycle surplus cytoplasmic mass under nutrient starvation conditions. TORC1 controls many of these processes via TIP41-TAP42-mediated inhibition of the type 2A-related phosphatases PP2A and SIT4. In nutrient-rich conditions, responsible for the phosphorylation of AGC S6 kinase (S6K) YPK3, activating YPK3 kinase activity and promoting phosphorylation of ribosomal protein S6. Phosphorylates kinase SCH9 at 6 amino acids in the C-terminus, activating SCH9 kinase activity to properly regulate ribosome biogenesis, translation initiation, and entry into stationary phase. TORC2 regulates cell cycle-dependent polarization of the actin-cytoskeleton, cell wall integrity, and receptor endocytosis. TORC2 controls polarity of the actin cytoskeleton, which is required for orienting the secretory pathway toward discrete growth sites, via the RHO1/PKC1/MAPK cell integrity pathway by activating the RHO1 guanine nucleotide exchange factor ROM2. TORC2 phosphorylates the AGC kinase YPK2, an upstream effector of the cell integrity pathway. TORC2 negatively regulates calcineurin-dependent stress signaling via phosphorylation of its effector SLM1-SLM2. The sequence is that of Serine/threonine-protein kinase TOR2 (TOR2) from Saccharomyces cerevisiae (strain ATCC 204508 / S288c) (Baker's yeast).